The primary structure comprises 220 residues: Small ribosomal subunit protein uS2 (220 aa).

Positions 201-220 (LPPDGDLPEPPSEFEVKFKR) are disordered.

The protein belongs to the universal ribosomal protein uS2 family.

In Staphylothermus marinus (strain ATCC 43588 / DSM 3639 / JCM 9404 / F1), this protein is Small ribosomal subunit protein uS2.